The following is a 1155-amino-acid chain: RhoGEF domain-containing protein gxcJ (1155 aa).

Disordered stretches follow at residues 114–216 (ENNS…NFLK), 259–333 (LNKK…IPSN), 429–460 (LVSQ…DSLE), 484–508 (LNNE…TTTT), and 604–639 (SNSN…NNYQ). Low complexity-rich tracts occupy residues 115 to 153 (NNSI…TNNN), 161 to 211 (TITN…NNNN), and 260 to 303 (NKKS…NNNN). The stretch at 192–257 (NNNNNNNNNN…KDIEKLNSAL (66 aa)) forms a coiled coil. The segment covering 304 to 319 (YKPTITSSQTQPSLME) has biased composition (polar residues). A compositionally biased stretch (basic and acidic residues) spans 320-330 (NSKDIDKKEKI). The span at 441–457 (FLASASSSSTTTITTTD) shows a compositional bias: low complexity. The span at 604 to 637 (SNSNSSNNNNSNSNNITNSNSSSFSKKNSNNNNN) shows a compositional bias: low complexity. Residues 700 to 874 (HRTNLIKEIL…EKIVGTINSQ (175 aa)) enclose the DH domain. The interval 1084-1155 (SHRLSIPSTS…LVKSLVNIKT (72 aa)) is disordered. Composition is skewed to low complexity over residues 1093-1121 (SSPN…GSPN) and 1128-1137 (QQQQLQQQQQ).

In terms of biological role, GTPase-activating protein. This Dictyostelium discoideum (Social amoeba) protein is RhoGEF domain-containing protein gxcJ (gxcJ).